Reading from the N-terminus, the 228-residue chain is Translation initiation factor 6 (228 aa).

The protein belongs to the eIF-6 family.

Binds to the 50S ribosomal subunit and prevents its association with the 30S ribosomal subunit to form the 70S initiation complex. In Thermococcus gammatolerans (strain DSM 15229 / JCM 11827 / EJ3), this protein is Translation initiation factor 6.